We begin with the raw amino-acid sequence, 1567 residues long: ABC multidrug transporter MDR1 (1567 aa).

Residues 1–11 (MASQPPQPPSG) show a composition bias toward pro residues. The disordered stretch occupies residues 1–37 (MASQPPQPPSGQPDTQYEEYQSEVITETTNRPTPAAD). A compositionally biased stretch (polar residues) spans 22–32 (SEVITETTNRP). N-linked (GlcNAc...) asparagine glycosylation is found at Asn149, Asn157, and Asn356. The ABC transporter 1 domain maps to 167–432 (VQYQDTFLSP…FEEMGWYCPP (266 aa)). Helical transmembrane passes span 543-563 (STIA…SLFF), 571-591 (GFFA…LMSI), 636-656 (IPIK…LGGL), 661-681 (AKFF…SAIF), 691-711 (IPQA…YTGF), and 798-818 (LGIL…VSEL). N-linked (GlcNAc...) asparagine glycans are attached at residues Asn819, Asn895, and Asn912. The ABC transporter 2 domain maps to 891–1134 (FTWRNVTYDI…LLNYFETHGA (244 aa)). 927–934 (GVSGAGKT) contributes to the ATP binding site. Positions 1172-1202 (ESRHVQQELDRIQSETSKRNEGHGQSAEKEP) are disordered. Residues 1231 to 1251 (IWGKLLLGLTSALFIGFSFFL) form a helical membrane-spanning segment. Asn1253 is a glycosylation site (N-linked (GlcNAc...) asparagine). Transmembrane regions (helical) follow at residues 1257 to 1277 (AGLQ…SSLV), 1305 to 1325 (VFLL…GIIA), 1345 to 1365 (ILLL…QMII), 1372 to 1392 (ETAG…NGVL), and 1498 to 1518 (GIGW…YYLI).

The protein belongs to the ABC transporter superfamily. ABCG family. PDR (TC 3.A.1.205) subfamily.

The protein resides in the cell membrane. It carries out the reaction voriconazole(in) + ATP + H2O = voriconazole(out) + ADP + phosphate + H(+). The catalysed reaction is fluconazole(in) + ATP + H2O = fluconazole(out) + ADP + phosphate + H(+). The enzyme catalyses (R)-miconazole(in) + ATP + H2O = (R)-miconazole(out) + ADP + phosphate + H(+). It catalyses the reaction (S)-miconazole(in) + ATP + H2O = (S)-miconazole(out) + ADP + phosphate + H(+). Functionally, pleiotropic ABC efflux transporter that may be involved in the modulation susceptibility to a wide range of unrelated cytotoxic compounds. This is ABC multidrug transporter MDR1 from Trichophyton tonsurans (strain CBS 112818) (Scalp ringworm fungus).